We begin with the raw amino-acid sequence, 252 residues long: N-glycosylase/DNA lyase (252 aa).

The 8-oxoguanine site is built by Q32, S60, and W71. The helix-hairpin-helix stretch occupies residues 129 to 193; it reads KTYYSDMEKL…KDSRIEKYTL (65 aa). K153 acts as the Schiff-base intermediate with DNA in catalysis. 8-oxoguanine is bound by residues F157 and P183. Residue D185 is part of the active site. The 8-oxoguanine site is built by D219 and W223.

It belongs to the archaeal N-glycosylase/DNA lyase (AGOG) family.

It catalyses the reaction 2'-deoxyribonucleotide-(2'-deoxyribose 5'-phosphate)-2'-deoxyribonucleotide-DNA = a 3'-end 2'-deoxyribonucleotide-(2,3-dehydro-2,3-deoxyribose 5'-phosphate)-DNA + a 5'-end 5'-phospho-2'-deoxyribonucleoside-DNA + H(+). Its function is as follows. DNA repair enzyme that is part of the base excision repair (BER) pathway; protects from oxidative damage by removing the major product of DNA oxidation, 8-oxoguanine (GO), from single- and double-stranded DNA substrates. In Methanococcus maripaludis (strain DSM 14266 / JCM 13030 / NBRC 101832 / S2 / LL), this protein is N-glycosylase/DNA lyase.